A 510-amino-acid chain; its full sequence is 2,3-bisphosphoglycerate-independent phosphoglycerate mutase (510 aa).

Mn(2+) is bound by residues D10 and S60. S60 acts as the Phosphoserine intermediate in catalysis. Residues H121, 150 to 151 (RD), R182, R188, 252 to 255 (RPDR), and K325 contribute to the substrate site. Mn(2+)-binding residues include D392, H396, D433, H434, and H451.

It belongs to the BPG-independent phosphoglycerate mutase family. Requires Mn(2+) as cofactor.

Its subcellular location is the plastid. The protein localises to the chloroplast. The catalysed reaction is (2R)-2-phosphoglycerate = (2R)-3-phosphoglycerate. Its pathway is carbohydrate degradation; glycolysis; pyruvate from D-glyceraldehyde 3-phosphate: step 3/5. Functionally, catalyzes the interconversion of 2-phosphoglycerate and 3-phosphoglycerate. The chain is 2,3-bisphosphoglycerate-independent phosphoglycerate mutase from Gracilaria tenuistipitata var. liui (Red alga).